Consider the following 405-residue polypeptide: MSERIVISPTSRQEGHAELVMEVDDEGIVTKGRYFSITPVRGLEKIVTGKAPETAPVIVQRICGVCPIPHTLASVEAIDDSLDIEVPKAGRLLRELTLAAHHVNSHAIHHFLIAPDFVPENLMADAINSVSEIRKNAQYVVDMVAGEGIHPSDVRIGGMADNITELARKRLYARLKQLKPKVDEHVELMIGLIEDKGLPKGLGVHNQPTLASHQIYGDRTKFDLDRFTEVMPESWYDDPEIAKRACSTIPLYDGRNVEVGPRARMVEFQGFKERGVVAQHVARALEMKTALARAIEILDELDTSAPVRADFDERGTGKLGVGAIEGPRGLDVHMAQVENGKIQFYSALVPTTWNIPTMGPATEGFHHEYGPHVIRAYDPCLSCATHVMVVDDEDRSVIRDEMVRL.

Ni(2+) is bound by residues C63, C66, C380, and C383.

It belongs to the [NiFe]/[NiFeSe] hydrogenase large subunit family. In terms of assembly, heterocomplex of the form (alpha(1)beta(1)gamma(1))(8). Ni(2+) is required as a cofactor. Requires iron-sulfur cluster as cofactor. It depends on FAD as a cofactor.

It carries out the reaction oxidized coenzyme F420-(gamma-L-Glu)(n) + H2 + H(+) = reduced coenzyme F420-(gamma-L-Glu)(n). In terms of biological role, reduces the physiological low-potential two-electron acceptor coenzyme F420, and the artificial one-electron acceptor methylviologen. In Methanothermobacter thermautotrophicus (strain ATCC 29096 / DSM 1053 / JCM 10044 / NBRC 100330 / Delta H) (Methanobacterium thermoautotrophicum), this protein is Coenzyme F420 hydrogenase subunit alpha (frhA).